The following is an 88-amino-acid chain: Ribonuclease P protein component 1 (88 aa).

This sequence belongs to the eukaryotic/archaeal RNase P protein component 1 family. As to quaternary structure, consists of a catalytic RNA component and at least 4-5 protein subunits.

The protein localises to the cytoplasm. The catalysed reaction is Endonucleolytic cleavage of RNA, removing 5'-extranucleotides from tRNA precursor.. Its function is as follows. Part of ribonuclease P, a protein complex that generates mature tRNA molecules by cleaving their 5'-ends. This chain is Ribonuclease P protein component 1, found in Nitrosopumilus maritimus (strain SCM1).